The primary structure comprises 78 residues: MEDIIVLFNRVTEKLEKELAIRIFVLAHQLERDKAIRLLQGLFWRYRFKKPRVDYCLCWWCCKFYYWQLQSTLSITTA.

The short motif at 35-43 is the Nuclear export signal element; sequence AIRLLQGLF. The short motif at 45–54 is the Nuclear localization signal element; sequence RYRFKKPRVD.

Its subcellular location is the virion. The protein localises to the host nucleus. Functionally, seems to function as a Vpr-like protein, since it mediates host cell cycle arrest in G2 phase. Cell cycle arrest creates a favorable environment for maximizing viral expression and production. The sequence is that of Probable Vpr-like protein from Feline immunodeficiency virus (isolate Petaluma) (FIV).